The following is a 56-amino-acid chain: Preprotein translocase subunit SecG (56 aa).

Residues Met-1–Ser-29 lie on the Cytoplasmic side of the membrane. The chain crosses the membrane as a helical span at residues Pro-30 to Gly-51. Over Pro-52–Gly-56 the chain is Extracellular.

The protein belongs to the SEC61-beta family. In terms of assembly, component of the protein translocase complex. Heterotrimer consisting of alpha (SecY), beta (SecG) and gamma (SecE) subunits. Can form oligomers of the heterotrimer.

It is found in the cell membrane. Functionally, involved in protein export. The function of the beta subunit is unknown, but it may be involved in stabilization of the trimeric complex. The polypeptide is Preprotein translocase subunit SecG (Thermococcus onnurineus (strain NA1)).